We begin with the raw amino-acid sequence, 192 residues long: UPF0301 protein Bphyt_0868 (192 aa).

This sequence belongs to the UPF0301 (AlgH) family.

The protein is UPF0301 protein Bphyt_0868 of Paraburkholderia phytofirmans (strain DSM 17436 / LMG 22146 / PsJN) (Burkholderia phytofirmans).